The chain runs to 297 residues: Ribosomal RNA small subunit methyltransferase A (297 aa).

Residues Asn28, Leu30, Gly55, Glu76, Asp101, and Asn126 each coordinate S-adenosyl-L-methionine.

Belongs to the class I-like SAM-binding methyltransferase superfamily. rRNA adenine N(6)-methyltransferase family. RsmA subfamily.

The protein localises to the cytoplasm. The catalysed reaction is adenosine(1518)/adenosine(1519) in 16S rRNA + 4 S-adenosyl-L-methionine = N(6)-dimethyladenosine(1518)/N(6)-dimethyladenosine(1519) in 16S rRNA + 4 S-adenosyl-L-homocysteine + 4 H(+). Its function is as follows. Specifically dimethylates two adjacent adenosines (A1518 and A1519) in the loop of a conserved hairpin near the 3'-end of 16S rRNA in the 30S particle. May play a critical role in biogenesis of 30S subunits. This is Ribosomal RNA small subunit methyltransferase A from Latilactobacillus sakei subsp. sakei (strain 23K) (Lactobacillus sakei subsp. sakei).